Reading from the N-terminus, the 139-residue chain is MGLADDAPLGYLLYRVGAVLRPEVSAALSPLGLTLPEFVCLRMLSQSPGLSSAELARHASVTPQAMNTVLRKLEDAGAVARPASVSSGRSLPATLTARGRALAKRAEAVVRAADARVLARLTAPQQREFKRMLEKLGSD.

One can recognise an HTH marR-type domain in the interval Asp-6–Ser-138.

In terms of assembly, homodimer.

Represses expression of the HQNO methyltransferase htm gene by binding to its promoter region. The polypeptide is HTH-type transcriptional repressor Mb2911 (Mycobacterium bovis (strain ATCC BAA-935 / AF2122/97)).